We begin with the raw amino-acid sequence, 425 residues long: Enolase (425 aa).

Gln-162 serves as a coordination point for (2R)-2-phosphoglycerate. Catalysis depends on Glu-204, which acts as the Proton donor. The Mg(2+) site is built by Asp-241, Glu-282, and Asp-309. Residues Lys-334, Arg-363, Ser-364, and Lys-385 each contribute to the (2R)-2-phosphoglycerate site. Catalysis depends on Lys-334, which acts as the Proton acceptor.

It belongs to the enolase family. The cofactor is Mg(2+).

It is found in the cytoplasm. It localises to the secreted. The protein resides in the cell surface. The enzyme catalyses (2R)-2-phosphoglycerate = phosphoenolpyruvate + H2O. Its pathway is carbohydrate degradation; glycolysis; pyruvate from D-glyceraldehyde 3-phosphate: step 4/5. Functionally, catalyzes the reversible conversion of 2-phosphoglycerate (2-PG) into phosphoenolpyruvate (PEP). It is essential for the degradation of carbohydrates via glycolysis. The protein is Enolase of Corynebacterium aurimucosum (strain ATCC 700975 / DSM 44827 / CIP 107346 / CN-1) (Corynebacterium nigricans).